The sequence spans 539 residues: Eukaryotic translation initiation factor 3 subunit L (539 aa).

Residues T302–H514 enclose the PCI domain.

It belongs to the eIF-3 subunit L family. As to quaternary structure, component of the eukaryotic translation initiation factor 3 (eIF-3) complex.

Its subcellular location is the cytoplasm. In terms of biological role, component of the eukaryotic translation initiation factor 3 (eIF-3) complex, which is involved in protein synthesis of a specialized repertoire of mRNAs and, together with other initiation factors, stimulates binding of mRNA and methionyl-tRNAi to the 40S ribosome. The eIF-3 complex specifically targets and initiates translation of a subset of mRNAs involved in cell proliferation. This is Eukaryotic translation initiation factor 3 subunit L from Anopheles gambiae (African malaria mosquito).